A 54-amino-acid chain; its full sequence is Large ribosomal subunit protein bL33A (54 aa).

This sequence belongs to the bacterial ribosomal protein bL33 family.

The sequence is that of Large ribosomal subunit protein bL33A from Saccharopolyspora erythraea (strain ATCC 11635 / DSM 40517 / JCM 4748 / NBRC 13426 / NCIMB 8594 / NRRL 2338).